We begin with the raw amino-acid sequence, 343 residues long: WAT1-related protein At1g43650 (343 aa).

The next 10 membrane-spanning stretches (helical) occupy residues 9–29 (MAMV…KVAI), 36–56 (FVFV…FAFF), 65–85 (LSFI…TLSL), 98–118 (TFAA…ALLF), 130–150 (GVAK…FAFV), 175–195 (SVKG…WIIM), 209–229 (LVAL…VAVN), 239–259 (FGLP…LTYW), 272–292 (FTAL…SFLF), and 296–316 (FYLG…LGLW). 2 consecutive EamA domains span residues 16-139 (IVYA…GSMV) and 188-313 (CWCL…GLYL).

This sequence belongs to the drug/metabolite transporter (DMT) superfamily. Plant drug/metabolite exporter (P-DME) (TC 2.A.7.4) family.

It is found in the membrane. This is WAT1-related protein At1g43650 from Arabidopsis thaliana (Mouse-ear cress).